Reading from the N-terminus, the 360-residue chain is Protein Wnt-2 (360 aa).

The N-terminal stretch at 1-37 is a signal peptide; sequence MIPRRSCWLILLLNLLNVQSLLDASWWSTVAQLSTAL. Cystine bridges form between Cys-80–Cys-91, Cys-130–Cys-138, Cys-140–Cys-158, Cys-213–Cys-227, Cys-215–Cys-222, Cys-289–Cys-320, Cys-305–Cys-315, Cys-319–Cys-359, Cys-335–Cys-350, Cys-337–Cys-347, and Cys-342–Cys-343. The N-linked (GlcNAc...) asparagine glycan is linked to Asn-90. Ser-219 carries O-palmitoleoyl serine; by mom-1 lipidation. Asn-352 carries an N-linked (GlcNAc...) asparagine glycan.

This sequence belongs to the Wnt family. Palmitoleoylation is required for efficient binding to frizzled receptors. Depalmitoleoylation leads to Wnt signaling pathway inhibition. In terms of tissue distribution, expressed in intestine, pharynx, anterior body wall muscle, vulva, some pharyngeal neurons and SMD head neurons. Expressed along the boundary between the intestine and muscle or hypodermis, but is also expressed in the hypodermis in cells including seam cells.

Its subcellular location is the secreted. It is found in the extracellular space. The protein resides in the extracellular matrix. Its function is as follows. Ligand for members of the frizzled family of seven transmembrane receptors. Probable developmental protein. May be a signaling molecule which affects the development of discrete regions of tissues. Is likely to signal over only few cell diameters. Involved in the correct positioning of the developing nerve ring and in axon guidance of SIA and SIB neurons, probably by binding to tyrosine kinase receptor cam-1. In addition, regulates the positioning of some head neuronal cells, muscle arms associated with the nerve ring and the excretory pore. Together with Wnt ligand cwn-1, regulates the migration of CAN, ALM, BDU and HSN neurons during embryogenesis, the migration of QL and QR neuroblast descendants during larval development, and polarity of ALM neurons. May act through the wnt receptor cfz-2 to regulate QR neuroblast descendant migration, and to direct ALM migration. Also plays a role in axon growth and guidance in HSN and male CP neurons. In addition, together with wnt ligand cwn-1, negatively regulates developmental neurite pruning of AIM neurons probably by acting as a ligand for receptor tyrosine kinase cam-1. Through the cam-1 receptor also probably regulates the outgrowth of neurites from RME GABAergic motor neurons. May act redundantly with other Wnt ligands such as cwn-1 and mom-2 to control seam cell polarity. The chain is Protein Wnt-2 from Caenorhabditis elegans.